A 316-amino-acid chain; its full sequence is NADH-cytochrome b5 reductase-like (316 aa).

In terms of domain architecture, Oxidoreductase-like spans K17–N53. The FAD-binding FR-type domain occupies E76–E178. FAD is bound by residues E158–G173 and G183–T215.

It belongs to the flavoprotein pyridine nucleotide cytochrome reductase family. It depends on FAD as a cofactor.

The enzyme catalyses 2 Fe(III)-[cytochrome b5] + NADH = 2 Fe(II)-[cytochrome b5] + NAD(+) + H(+). Functionally, NADH-cytochrome b5 reductases are involved in desaturation and elongation of fatty acids, cholesterol biosynthesis, drug metabolism, and, in erythrocyte, methemoglobin reduction. In Mus musculus (Mouse), this protein is NADH-cytochrome b5 reductase-like (Cyb5rl).